The chain runs to 495 residues: Transcription termination/antitermination protein NusA (495 aa).

The S1 motif domain occupies 135-200 (GKIVTGTVKK…KTAQLFVTRS (66 aa)). Residues 302–374 (NHSMDIAVEA…LDEEFAQILV (73 aa)) enclose the KH domain.

It belongs to the NusA family. In terms of assembly, monomer. Binds directly to the core enzyme of the DNA-dependent RNA polymerase and to nascent RNA.

It localises to the cytoplasm. In terms of biological role, participates in both transcription termination and antitermination. This Haemophilus influenzae (strain ATCC 51907 / DSM 11121 / KW20 / Rd) protein is Transcription termination/antitermination protein NusA.